The chain runs to 31 residues: Cytochrome b6-f complex subunit 6 (31 aa).

The chain crosses the membrane as a helical span at residues 4 to 26 (ITSYFGFLLAASTITPALFIGLS).

It belongs to the PetL family. As to quaternary structure, the 4 large subunits of the cytochrome b6-f complex are cytochrome b6, subunit IV (17 kDa polypeptide, PetD), cytochrome f and the Rieske protein, while the 4 small subunits are PetG, PetL, PetM and PetN. The complex functions as a dimer.

The protein localises to the plastid. It is found in the chloroplast thylakoid membrane. Its function is as follows. Component of the cytochrome b6-f complex, which mediates electron transfer between photosystem II (PSII) and photosystem I (PSI), cyclic electron flow around PSI, and state transitions. PetL is important for photoautotrophic growth as well as for electron transfer efficiency and stability of the cytochrome b6-f complex. The protein is Cytochrome b6-f complex subunit 6 of Buxus microphylla (Littleleaf boxwood).